The primary structure comprises 349 residues: Peroxidase 22 (349 aa).

Positions 1–29 are cleaved as a signal peptide; it reads MGFSPSFSCSAIGALILGCLLLQASNSNA. Residue glutamine 30 is modified to Pyrrolidone carboxylic acid. Disulfide bonds link cysteine 40–cysteine 120, cysteine 73–cysteine 78, cysteine 126–cysteine 329, and cysteine 206–cysteine 238. Histidine 71 (proton acceptor) is an active-site residue. Residues aspartate 72, valine 75, glycine 77, aspartate 79, and serine 81 each contribute to the Ca(2+) site. Residue asparagine 86 is glycosylated (N-linked (GlcNAc...) asparagine). Proline 168 is a substrate binding site. Asparagine 173 and asparagine 187 each carry an N-linked (GlcNAc...) asparagine glycan. A heme b-binding site is contributed by histidine 199. Ca(2+) is bound at residue threonine 200. Residues asparagine 217 and asparagine 243 are each glycosylated (N-linked (GlcNAc...) asparagine). The Ca(2+) site is built by aspartate 251, threonine 254, and aspartate 259.

This sequence belongs to the peroxidase family. Classical plant (class III) peroxidase subfamily. It depends on heme b as a cofactor. Ca(2+) serves as cofactor. In terms of tissue distribution, mainly expressed in roots.

It is found in the secreted. Its subcellular location is the vacuole. The enzyme catalyses 2 a phenolic donor + H2O2 = 2 a phenolic radical donor + 2 H2O. Functionally, removal of H(2)O(2), oxidation of toxic reductants, biosynthesis and degradation of lignin, suberization, auxin catabolism, response to environmental stresses such as wounding, pathogen attack and oxidative stress. These functions might be dependent on each isozyme/isoform in each plant tissue. This chain is Peroxidase 22 (PER22), found in Arabidopsis thaliana (Mouse-ear cress).